A 38-amino-acid chain; its full sequence is Toxin Bot33 (38 aa).

3 cysteine pairs are disulfide-bonded: Cys8–Cys28, Cys14–Cys33, and Cys18–Cys35.

Belongs to the short scorpion toxin superfamily. Potassium channel inhibitor family. In terms of tissue distribution, expressed by the venom gland.

The protein localises to the secreted. A probable toxin that has no activity on the tested mammalian voltage-gated potassium channels (when tested at 1 uM) and is not toxic to mice. It resembles alpha toxins that block voltage-gated potassium channels. The polypeptide is Toxin Bot33 (Buthus occitanus tunetanus (Common European scorpion)).